The chain runs to 647 residues: NADP-dependent malic enzyme, chloroplastic (647 aa).

Residues 1-61 (MMSLNSSSVV…VDGAVKDVNA (61 aa)) constitute a chloroplast transit peptide. Residue Y195 is the Proton donor of the active site. Residue R248 participates in NAD(+) binding. K266 functions as the Proton acceptor in the catalytic mechanism. A divalent metal cation is bound by residues E338, D339, and D362. D362 contacts NAD(+). 391 to 407 (LFLGAGEAGTGIAELIA) contributes to the NADP(+) binding site. N503 serves as a coordination point for NAD(+).

Belongs to the malic enzymes family. As to quaternary structure, homotetramer. It depends on Mg(2+) as a cofactor. Requires Mn(2+) as cofactor.

The protein localises to the plastid. Its subcellular location is the chloroplast. It catalyses the reaction (S)-malate + NADP(+) = pyruvate + CO2 + NADPH. The catalysed reaction is oxaloacetate + H(+) = pyruvate + CO2. Its pathway is photosynthesis; C3 acid pathway. Functionally, the chloroplastic ME isoform decarboxylates malate shuttled from neighboring mesophyll cells. The CO(2) released is then refixed by ribulose-bisphosphate carboxylase. This pathway eliminates the photorespiratory loss of CO(2) that occurs in most plants. The chain is NADP-dependent malic enzyme, chloroplastic (MODA) from Flaveria pringlei.